A 103-amino-acid chain; its full sequence is Small ribosomal subunit protein uS10 (103 aa).

Belongs to the universal ribosomal protein uS10 family. As to quaternary structure, part of the 30S ribosomal subunit.

Its function is as follows. Involved in the binding of tRNA to the ribosomes. This chain is Small ribosomal subunit protein uS10, found in Jannaschia sp. (strain CCS1).